A 333-amino-acid chain; its full sequence is uncharacterized protein (333 aa).

Positions 1-23 (MSRSFMIILTIMLIALSLGEVLA) are cleaved as a signal peptide. The helical transmembrane segment at 232 to 252 (SFFLGVLVTLMILSPVIVYLW) threads the bilayer.

The protein resides in the membrane. This is an uncharacterized protein from Pyrococcus abyssi (strain GE5 / Orsay).